Reading from the N-terminus, the 103-residue chain is Large ribosomal subunit protein mL41 (103 aa).

It belongs to the mitochondrion-specific ribosomal protein mL41 family. In terms of assembly, component of the mitochondrial large ribosomal subunit (mt-LSU). Mature N.crassa 74S mitochondrial ribosomes consist of a small (37S) and a large (54S) subunit. The 37S small subunit contains a 16S ribosomal RNA (16S mt-rRNA) and 32 different proteins. The 54S large subunit contains a 23S rRNA (23S mt-rRNA) and 42 different proteins.

It localises to the mitochondrion. Functionally, component of the mitochondrial ribosome (mitoribosome), a dedicated translation machinery responsible for the synthesis of mitochondrial genome-encoded proteins, including at least some of the essential transmembrane subunits of the mitochondrial respiratory chain. The mitoribosomes are attached to the mitochondrial inner membrane and translation products are cotranslationally integrated into the membrane. This Neurospora crassa (strain ATCC 24698 / 74-OR23-1A / CBS 708.71 / DSM 1257 / FGSC 987) protein is Large ribosomal subunit protein mL41 (mrpl27).